Reading from the N-terminus, the 278-residue chain is D-arabinitol 2-dehydrogenase [ribulose-forming] (278 aa).

NADP(+) is bound by residues Leu-28 and Asn-49. The Proton donor role is filled by Ser-166. Residues Tyr-181, Lys-185, Ile-214, and Thr-216 each coordinate NADP(+). The active-site Proton acceptor is Tyr-181. Lys-185 serves as the catalytic Lowers pKa of active site Tyr.

The protein belongs to the short-chain dehydrogenases/reductases (SDR) family.

It carries out the reaction D-arabinitol + NAD(+) = D-ribulose + NADH + H(+). It participates in carbohydrate metabolism; D-arabinitol metabolism. The sequence is that of D-arabinitol 2-dehydrogenase [ribulose-forming] (ARDH) from Scheffersomyces stipitis (strain ATCC 58785 / CBS 6054 / NBRC 10063 / NRRL Y-11545) (Yeast).